Reading from the N-terminus, the 314-residue chain is Carbamate kinase (314 aa).

It belongs to the carbamate kinase family. Homodimer.

It is found in the cytoplasm. The catalysed reaction is hydrogencarbonate + NH4(+) + ATP = carbamoyl phosphate + ADP + H2O + H(+). Its pathway is metabolic intermediate metabolism; carbamoyl phosphate degradation; CO(2) and NH(3) from carbamoyl phosphate: step 1/1. The polypeptide is Carbamate kinase (arcC) (Clostridium perfringens (strain 13 / Type A)).